Here is a 1320-residue protein sequence, read N- to C-terminus: Junctional cadherin 5-associated protein (1320 aa).

Disordered regions lie at residues 1-124, 183-202, 209-233, 252-426, 452-492, 676-720, 741-802, and 835-942; these read MYSV…GSGS, KKPR…KRPQ, YPFV…ALSP, GVPK…SIQY, DDTS…NEQS, ASSP…PTPT, NQKP…STTG, and ELQE…QKSQ. 2 stretches are compositionally biased toward polar residues: residues 58-71 and 95-107; these read RTSL…NSEN and NQPS…QPQS. The span at 108-119 shows a compositional bias: basic and acidic residues; sequence GRDDIYWSRGRQ. The span at 255–267 shows a compositional bias: pro residues; sequence KVPPYPPSFPSPS. The span at 308–329 shows a compositional bias: basic and acidic residues; sequence FQDHQHRDPRGSYPTRSKDPSH. A compositionally biased stretch (pro residues) spans 338–356; it reads LEPPVYVPPPSYRSPPQHI. Residues 369 to 378 show a composition bias toward polar residues; the sequence is VSSNQSQQQV. A compositionally biased stretch (pro residues) spans 404–415; that stretch reads GSPPQGLPPQPY. Positions 454 to 465 are enriched in polar residues; sequence TSYNPGLLTTQE. Phosphothreonine is present on T484. At S486 the chain carries Phosphoserine. A compositionally biased stretch (polar residues) spans 741–782; the sequence is NQKPSVPHLQGQTSLSPSRNSAFSRTSSAINQASMSKGTSDQ. Residues 849 to 859 are compositionally biased toward acidic residues; it reads EDSEAEQPEDC. S851 bears the Phosphoserine mark. Over residues 865 to 877 the composition is skewed to polar residues; that stretch reads KSWALQGTRTAQQ. Phosphoserine occurs at positions 1027 and 1033. Disordered stretches follow at residues 1085-1116 and 1153-1174; these read ARRT…SLAL and SDVD…KDEE. Residues S1245 and S1248 each carry the phosphoserine modification. The interval 1275–1320 is disordered; the sequence is DEAWQAGHLPSVSQNENGHPEVPRDKMSDQDLWCADSYDPSRVERV. A compositionally biased stretch (basic and acidic residues) spans 1292–1303; that stretch reads GHPEVPRDKMSD.

The protein resides in the cell junction. It localises to the adherens junction. In Mus musculus (Mouse), this protein is Junctional cadherin 5-associated protein.